The sequence spans 259 residues: Thiazole synthase (259 aa).

Lys98 (schiff-base intermediate with DXP) is an active-site residue. 1-deoxy-D-xylulose 5-phosphate-binding positions include Gly159, 185–186, and 207–208; these read AG and NS.

This sequence belongs to the ThiG family. Homotetramer. Forms heterodimers with either ThiH or ThiS.

It is found in the cytoplasm. It carries out the reaction [ThiS sulfur-carrier protein]-C-terminal-Gly-aminoethanethioate + 2-iminoacetate + 1-deoxy-D-xylulose 5-phosphate = [ThiS sulfur-carrier protein]-C-terminal Gly-Gly + 2-[(2R,5Z)-2-carboxy-4-methylthiazol-5(2H)-ylidene]ethyl phosphate + 2 H2O + H(+). It participates in cofactor biosynthesis; thiamine diphosphate biosynthesis. Catalyzes the rearrangement of 1-deoxy-D-xylulose 5-phosphate (DXP) to produce the thiazole phosphate moiety of thiamine. Sulfur is provided by the thiocarboxylate moiety of the carrier protein ThiS. In vitro, sulfur can be provided by H(2)S. The sequence is that of Thiazole synthase from Chlorobium phaeobacteroides (strain DSM 266 / SMG 266 / 2430).